A 366-amino-acid chain; its full sequence is Histone-lysine N-methyltransferase SETD7 (366 aa).

MORN repeat units lie at residues 36–58, 59–81, and 106–128; these read FEGNFVHGEKNGRGKFFFFDGST, LEGYYVDDALQGQGVYTYEDGGV, and FKGQYKDNNRHGVCWIHYPDGGS. Residues 214 to 336 form the SET domain; that stretch reads ERVYVADSLI…AEEELTVAYG (123 aa). Residues 226–228, N296, H297, and E356 each bind S-adenosyl-L-methionine; that span reads AGE.

This sequence belongs to the class V-like SAM-binding methyltransferase superfamily. Histone-lysine methyltransferase family. SET7 subfamily. Interacts with IPF1/PDX-1.

The protein localises to the nucleus. It localises to the chromosome. The enzyme catalyses L-lysyl(4)-[histone H3] + S-adenosyl-L-methionine = N(6)-methyl-L-lysyl(4)-[histone H3] + S-adenosyl-L-homocysteine + H(+). It carries out the reaction L-lysyl-[protein] + S-adenosyl-L-methionine = N(6)-methyl-L-lysyl-[protein] + S-adenosyl-L-homocysteine + H(+). Histone methyltransferase that specifically monomethylates 'Lys-4' of histone H3. H3 'Lys-4' methylation represents a specific tag for epigenetic transcriptional activation. Plays a central role in the transcriptional activation of genes such as collagenase or insulin. Recruited by IPF1/PDX-1 to the insulin promoter, leading to activate transcription. Also has methyltransferase activity toward non-histone proteins such as CGAS, p53/TP53, TAF10, and possibly TAF7 by recognizing and binding the [KR]-[STA]-K in substrate proteins. Monomethylates 'Lys-189' of TAF10, leading to increase the affinity of TAF10 for RNA polymerase II. Monomethylates 'Lys-372' of p53/TP53, stabilizing p53/TP53 and increasing p53/TP53-mediated transcriptional activation. Monomethylates 'Lys-491' of CGAS, promoting interaction between SGF29 and CGAS. This Mus musculus (Mouse) protein is Histone-lysine N-methyltransferase SETD7 (Setd7).